Reading from the N-terminus, the 1138-residue chain is Lysylphosphatidylglycerol biosynthesis bifunctional protein LysX (1138 aa).

The span at 1–15 (MALDTPSSDLPVSTD) shows a compositional bias: polar residues. The interval 1–34 (MALDTPSSDLPVSTDDTAEHQPTPAHRPPSAADR) is disordered. The tract at residues 1–646 (MALDTPSSDL…LIAQLESEED (646 aa)) is phosphatidylglycerol lysyltransferase. Helical transmembrane passes span 56-76 (IAGT…IFPL), 92-112 (IVSL…VAIA), 119-139 (IAWW…ALLL), 155-175 (IQIW…IVTY), 190-210 (ALGV…GLVW), and 247-267 (IVID…AATV). Positions 647–1138 (RTAVEVHRPE…AFPMVKPTDA (492 aa)) are lysine--tRNA ligase. Residues 698–772 (VTIAGRVTKM…GELSVLIDAW (75 aa)) constitute a DNA-binding region (OB). D1048 and E1055 together coordinate Mg(2+).

In the N-terminal section; belongs to the LPG synthetase family. The protein in the C-terminal section; belongs to the class-II aminoacyl-tRNA synthetase family. It depends on Mg(2+) as a cofactor.

It is found in the cell membrane. The catalysed reaction is tRNA(Lys) + L-lysine + ATP = L-lysyl-tRNA(Lys) + AMP + diphosphate. The enzyme catalyses L-lysyl-tRNA(Lys) + a 1,2-diacyl-sn-glycero-3-phospho-(1'-sn-glycerol) = a 1,2-diacyl-sn-glycero-3-phospho-1'-(3'-O-L-lysyl)-sn-glycerol + tRNA(Lys). Its function is as follows. Catalyzes the production of L-lysyl-tRNA(Lys)transfer and the transfer of a lysyl group from L-lysyl-tRNA(Lys) to membrane-bound phosphatidylglycerol (PG), which produces lysylphosphatidylglycerol (LPG), one of the components of the bacterial membrane with a positive net charge. LPG synthesis contributes to the resistance to cationic antimicrobial peptides (CAMPs) and likely protects M.tuberculosis against the CAMPs produced by competiting microorganisms (bacteriocins). In fact, the modification of anionic phosphatidylglycerol with positively charged L-lysine results in repulsion of the peptides. This Gordonia bronchialis (strain ATCC 25592 / DSM 43247 / BCRC 13721 / JCM 3198 / KCTC 3076 / NBRC 16047 / NCTC 10667) (Rhodococcus bronchialis) protein is Lysylphosphatidylglycerol biosynthesis bifunctional protein LysX (lysX).